Consider the following 639-residue polypeptide: Protein zwilch homolog (639 aa).

The span at 76-95 shows a compositional bias: basic and acidic residues; sequence QKTSSLLNRRENKKTIKSEK. A disordered region spans residues 76–116; sequence QKTSSLLNRRENKKTIKSEKEDESMDMETAEGDKENTVSET. Positions 96 to 105 are enriched in acidic residues; sequence EDESMDMETA.

This sequence belongs to the ZWILCH family. Component of the RZZ complex composed of rod-1, czw-1 and zwl-1. Interacts with the spindly-like protein spdl-1. Interacts with NDC80 complex component ndc-80.

The protein resides in the cytoplasm. Its subcellular location is the cell cortex. The protein localises to the chromosome. It localises to the centromere. It is found in the kinetochore. The protein resides in the cytoskeleton. Its subcellular location is the spindle. Functionally, essential component of the mitotic checkpoint, which prevents cells from prematurely exiting mitosis. Required for chromosome segregation, the assembly of the dynein-dynactin and mdf-1-mdf-2 complexes onto kinetochores and spindle pole separation. Its function related to the spindle assembly machinery and kinetochore-microtubule attachments likely depends on its association in the mitotic RZZ complex. The RZZ complex recruits the spindly-like protein spdl-1 to kinetochores. To prevent irregular chromosome segregation, the complex also inhibits the attachment of the kinetochore-associated NDC80 complex to microtubules. The recruitment of spdl-1 to kinetochores relieves this inhibition. Required for embryonic development. The sequence is that of Protein zwilch homolog (zwl-1) from Caenorhabditis briggsae.